We begin with the raw amino-acid sequence, 112 residues long: Cytochrome c type-1 (112 aa).

4 residues coordinate heme c: C20, C23, H24, and M85.

In terms of processing, binds 1 heme c group covalently per subunit.

It is found in the mitochondrion intermembrane space. In terms of biological role, electron carrier between complex III (ubiquinol-cytochrome c oxireductase) and complex IV (cytochrome c oxidase). In Ascaris suum (Pig roundworm), this protein is Cytochrome c type-1.